The following is a 331-amino-acid chain: Laforin (331 aa).

Residues 1-124 form the CBM20 domain; it reads MLFRFGVVVP…NNLVDGVYCL (124 aa). At Ser25 the chain carries Phosphoserine; by AMPK. Substrate contacts are provided by residues Trp32, Lys87, 103 to 107, Asp197, Asp235, and Arg241; that span reads GPHHD. One can recognise a Tyrosine-protein phosphatase domain in the interval 156–323; that stretch reads HYSRILPNIW…QQDFFQKFGK (168 aa). Cys266 serves as the catalytic Phosphocysteine intermediate. The short motif at 266–272 is the Glucan phosphatase signature motif CXAGXGR element; sequence CNAGVGR. Substrate is bound by residues 267–272 and Tyr304; that span reads NAGVGR.

The protein belongs to the protein-tyrosine phosphatase family. In terms of assembly, homodimer. Interacts with itself. Interacts with PPP1R3B, PPP1R3C, PPP1R3D, HIRIP5, and EPM2AIP1. Binds glycogen and Lafora bodies. Interacts with NHLRC1/malin (via the NHL repeats). Forms a complex with NHLRC1/malin and HSP70. Interacts with PPP1R3D; in the presence of NHLC1/malin the interaction leads to ubiquitination and autophagic degradation of PPP1R3D. Interacts (via the phosphatase domain) with MAPT/Tau; the interaction dephosphorylates MAPT. Interacts with PRDM8. Post-translationally, polyubiquitinated by NHLRC1/malin. In terms of processing, phosphorylation on Ser-25 by AMPK affects the phosphatase activity of the enzyme and its ability to homodimerize and interact with NHLRC1, PPP1R3C or PRKAA2. In terms of tissue distribution, widely expressed.

Its subcellular location is the cytoplasm. It is found in the endoplasmic reticulum membrane. It localises to the cell membrane. The enzyme catalyses O-phospho-L-tyrosyl-[protein] + H2O = L-tyrosyl-[protein] + phosphate. It catalyses the reaction O-phospho-L-seryl-[protein] + H2O = L-seryl-[protein] + phosphate. The catalysed reaction is O-phospho-L-threonyl-[protein] + H2O = L-threonyl-[protein] + phosphate. In terms of biological role, plays an important role in preventing glycogen hyperphosphorylation and the formation of insoluble aggregates, via its activity as glycogen phosphatase, and by promoting the ubiquitination of proteins involved in glycogen metabolism via its interaction with the E3 ubiquitin ligase NHLRC1/malin. Dephosphorylates phosphotyrosine and synthetic substrates, such as para-nitrophenylphosphate (pNPP), and has low activity with phosphoserine and phosphothreonine substrates (in vitro). Has also been shown to dephosphorylate MAPT. Shows strong phosphatase activity towards complex carbohydrates in vitro, avoiding glycogen hyperphosphorylation which is associated with reduced branching and formation of insoluble aggregates. Forms a complex with NHLRC1/malin and HSP70, which suppresses the cellular toxicity of misfolded proteins by promoting their degradation through the ubiquitin-proteasome system (UPS). Acts as a scaffold protein to facilitate PPP1R3C/PTG ubiquitination by NHLRC1/malin. Also promotes proteasome-independent protein degradation through the macroautophagy pathway. The polypeptide is Laforin (Epm2a) (Rattus norvegicus (Rat)).